The following is a 488-amino-acid chain: MSFNHKTIEELHDLLVAKEISATELTQKTLEDIKSREEAVGSFITVSEEAALKQAAAIDAKGIDADNLMSGIPLAVKDNISTKGILTTAASKMLYNYEPIFDATSVANAYAKDMIVIGKTNMDEFAMGGSTETSYFKKTKNAWDHTKVPGGSSGGSATAVASGQVRLSLGSDTGGSIRQPAAFNGVVGLKPTYGTVSRYGLIAFGSSLDQIGPFAPTVKENAQLLNVIASSDVKDATSAPVRIADYTSKIGRDIKGMKIAFPKEYLGEGIDPKIKETVLAAAKQFEALGATVEEVSLPHSKYGVAVYYIIASSEASSNLQRFDGIRYGFRADDAKNLDEIYVNTRSQGFGDEVKRRIMLGTFSLSSGYYDAYFKKAGQVRTLIIEDFDKVFADYDLILGPTTPAVAFGLDTLNHDPVAMYLADLLTIPVNLAGLPGISIPAGFVDGLPVGLQLIGPKYAEETIYQAAAAFEAVTDYHKQQPIIFGGDK.

Residues Lys-77 and Ser-152 each act as charge relay system in the active site. Ser-176 serves as the catalytic Acyl-ester intermediate.

This sequence belongs to the amidase family. GatA subfamily. Heterotrimer of A, B and C subunits.

The enzyme catalyses L-glutamyl-tRNA(Gln) + L-glutamine + ATP + H2O = L-glutaminyl-tRNA(Gln) + L-glutamate + ADP + phosphate + H(+). Its function is as follows. Allows the formation of correctly charged Gln-tRNA(Gln) through the transamidation of misacylated Glu-tRNA(Gln) in organisms which lack glutaminyl-tRNA synthetase. The reaction takes place in the presence of glutamine and ATP through an activated gamma-phospho-Glu-tRNA(Gln). The polypeptide is Glutamyl-tRNA(Gln) amidotransferase subunit A (Streptococcus pyogenes serotype M12 (strain MGAS2096)).